Reading from the N-terminus, the 38-residue chain is CHH precursor-related peptide (38 aa).

The disordered stretch occupies residues 18–38 (GALEPSTPLGDLSGSLGHPVE).

In terms of tissue distribution, produced by the medulla terminalis X-organ in the eyestalks and transported to the sinus gland where it is stored and released.

Its subcellular location is the secreted. This chain is CHH precursor-related peptide, found in Cancer pagurus (Rock crab).